We begin with the raw amino-acid sequence, 318 residues long: BES1/BZR1 homolog protein 2 (318 aa).

The span at 1 to 13 shows a compositional bias: gly residues; the sequence is MAAGGGGGGGGSS. Disordered stretches follow at residues 1 to 34, 84 to 133, 166 to 195, and 209 to 231; these read MAAG…RRRR, FKPP…PSPS, NSAP…PNGG, and APSS…CDES. The required for DNA-binding stretch occupies residues 16–97; that stretch reads RTPTWKEREN…ASDISGTPTN (82 aa). The segment covering 91-101 has biased composition (polar residues); it reads ISGTPTNFSTN. Over residues 102–133 the composition is skewed to low complexity; it reads SSIQPSPQSSAFPSPAPSYHGSPVSSSFPSPS.

It belongs to the BZR/LAT61 family. Post-translationally, phosphorylated. Phosphorylation increases protein degradation.

This Arabidopsis thaliana (Mouse-ear cress) protein is BES1/BZR1 homolog protein 2 (BEH2).